The following is a 126-amino-acid chain: UPF0538 protein C2orf76 homolog (126 aa).

This sequence belongs to the UPF0538 family.

This Bos taurus (Bovine) protein is UPF0538 protein C2orf76 homolog.